A 326-amino-acid polypeptide reads, in one-letter code: Metallophosphoesterase domain-containing protein 1 (326 aa).

The protein belongs to the UPF0046 family. As to expression, expressed predominantly in adult brain.

Functionally, may have metallophosphoesterase activity (in vitro). The polypeptide is Metallophosphoesterase domain-containing protein 1 (MPPED1) (Homo sapiens (Human)).